We begin with the raw amino-acid sequence, 694 residues long: Elongation factor G (694 aa).

The region spanning Glu-10 to Leu-285 is the tr-type G domain. Residues Ala-19–Thr-26, Asp-83–His-87, and Asn-137–Asp-140 contribute to the GTP site.

The protein belongs to the TRAFAC class translation factor GTPase superfamily. Classic translation factor GTPase family. EF-G/EF-2 subfamily.

The protein localises to the cytoplasm. Its function is as follows. Catalyzes the GTP-dependent ribosomal translocation step during translation elongation. During this step, the ribosome changes from the pre-translocational (PRE) to the post-translocational (POST) state as the newly formed A-site-bound peptidyl-tRNA and P-site-bound deacylated tRNA move to the P and E sites, respectively. Catalyzes the coordinated movement of the two tRNA molecules, the mRNA and conformational changes in the ribosome. The protein is Elongation factor G of Lactobacillus delbrueckii subsp. bulgaricus (strain ATCC 11842 / DSM 20081 / BCRC 10696 / JCM 1002 / NBRC 13953 / NCIMB 11778 / NCTC 12712 / WDCM 00102 / Lb 14).